A 138-amino-acid chain; its full sequence is Large ribosomal subunit protein uL16 (138 aa).

Residues 1–19 (MLIPRKVKHRKQHHPKKKG) are compositionally biased toward basic residues. Residues 1–24 (MLIPRKVKHRKQHHPKKKGTASGG) are disordered.

The protein belongs to the universal ribosomal protein uL16 family. As to quaternary structure, part of the 50S ribosomal subunit.

Functionally, binds 23S rRNA and is also seen to make contacts with the A and possibly P site tRNAs. The protein is Large ribosomal subunit protein uL16 of Mycobacteroides abscessus (strain ATCC 19977 / DSM 44196 / CCUG 20993 / CIP 104536 / JCM 13569 / NCTC 13031 / TMC 1543 / L948) (Mycobacterium abscessus).